Consider the following 556-residue polypeptide: CDP-diacylglycerol--glycerol-3-phosphate 3-phosphatidyltransferase, mitochondrial (556 aa).

The N-terminal 28 residues, 1 to 28 (MAVAAAAAAGPVFWRRLLGLLPGRPGLA), are a transit peptide targeting the mitochondrion. Ser49 bears the Phosphoserine mark. Residue 124–131 (ASLYLGTG) coordinates ATP. PLD phosphodiesterase domains are found at residues 215 to 241 (TIGL…SDSY) and 460 to 493 (RGWT…GYRS). Active-site residues include His220, Lys222, and Asp227.

The protein belongs to the CDP-alcohol phosphatidyltransferase class-II family.

The protein localises to the mitochondrion. The catalysed reaction is a CDP-1,2-diacyl-sn-glycerol + sn-glycerol 3-phosphate = a 1,2-diacyl-sn-glycero-3-phospho-(1'-sn-glycero-3'-phosphate) + CMP + H(+). The protein operates within phospholipid metabolism; phosphatidylglycerol biosynthesis; phosphatidylglycerol from CDP-diacylglycerol: step 1/2. With respect to regulation, activated by calcium and magnesium and inhibited by other bivalent cations. In terms of biological role, functions in the biosynthesis of the anionic phospholipids phosphatidylglycerol and cardiolipin. This Pongo abelii (Sumatran orangutan) protein is CDP-diacylglycerol--glycerol-3-phosphate 3-phosphatidyltransferase, mitochondrial (PGS1).